Reading from the N-terminus, the 932-residue chain is RNA-binding protein 12 (932 aa).

The interval 97–116 (IPPANASRSGPPPSSGMSGR) is disordered. Positions 98–116 (PPANASRSGPPPSSGMSGR) are enriched in low complexity. The RRM 1 domain maps to 304 to 379 (LYVSVHGMPF…RYVEVSPATE (76 aa)). Phosphoserine is present on residues serine 352 and serine 375. Polar residues-rich tracts occupy residues 392-401 (KQNMGPSGQT) and 408-417 (LPRSKSPSGQ). The interval 392 to 424 (KQNMGPSGQTHPPPQTLPRSKSPSGQKRSRSRS) is disordered. Serine 420, serine 422, and serine 424 each carry phosphoserine. The 78-residue stretch at 430–507 (FCVYLKGLPF…RFIQVHPITK (78 aa)) folds into the RRM 2 domain. Serine 525 is subject to Phosphoserine. Positions 717–734 (NGPPFNFPGNFGGSNAFG) are enriched in low complexity. A disordered region spans residues 717 to 855 (NGPPFNFPGN…PGFASSSGKP (139 aa)). Gly residues predominate over residues 783 to 811 (SGFGGGPQNFGNGPGSLGGPPGFGSGPPG). Residues 824–838 (AFGPGPGPGPGPGPG) show a composition bias toward pro residues. An RRM 3 domain is found at 856–932 (GPTVIKVQNM…PIGSRKVNLY (77 aa)).

It is found in the nucleus. In Pongo abelii (Sumatran orangutan), this protein is RNA-binding protein 12 (RBM12).